We begin with the raw amino-acid sequence, 599 residues long: Elongation factor 4 (599 aa).

Positions 4-185 (KNIRNFSIIA…VIIKKVPSPK (182 aa)) constitute a tr-type G domain. Residues 16–21 (DHGKST) and 132–135 (NKVD) each bind GTP.

Belongs to the TRAFAC class translation factor GTPase superfamily. Classic translation factor GTPase family. LepA subfamily.

It is found in the cell membrane. It carries out the reaction GTP + H2O = GDP + phosphate + H(+). Required for accurate and efficient protein synthesis under certain stress conditions. May act as a fidelity factor of the translation reaction, by catalyzing a one-codon backward translocation of tRNAs on improperly translocated ribosomes. Back-translocation proceeds from a post-translocation (POST) complex to a pre-translocation (PRE) complex, thus giving elongation factor G a second chance to translocate the tRNAs correctly. Binds to ribosomes in a GTP-dependent manner. In Mycoplasmoides gallisepticum (strain R(low / passage 15 / clone 2)) (Mycoplasma gallisepticum), this protein is Elongation factor 4.